Reading from the N-terminus, the 184-residue chain is Elongation factor P (184 aa).

The protein belongs to the elongation factor P family.

Its subcellular location is the cytoplasm. Its pathway is protein biosynthesis; polypeptide chain elongation. In terms of biological role, involved in peptide bond synthesis. Stimulates efficient translation and peptide-bond synthesis on native or reconstituted 70S ribosomes in vitro. Probably functions indirectly by altering the affinity of the ribosome for aminoacyl-tRNA, thus increasing their reactivity as acceptors for peptidyl transferase. The chain is Elongation factor P from Verminephrobacter eiseniae (strain EF01-2).